The chain runs to 151 residues: 4-hydroxybenzoyl-CoA thioesterase (151 aa).

Glu-73 is an active-site residue. 100-102 (FFR) contributes to the substrate binding site.

This sequence belongs to the thioesterase PaaI family. Homotetramer.

The enzyme catalyses 4-hydroxybenzoyl-CoA + H2O = 4-hydroxybenzoate + CoA + H(+). It functions in the pathway xenobiotic degradation; 4-chlorobenzoate degradation; 4-hydroxybenzoate from 4-chlorobenzoate: step 3/3. The chain is 4-hydroxybenzoyl-CoA thioesterase from Arthrobacter globiformis.